Here is a 509-residue protein sequence, read N- to C-terminus: Maturase K (509 aa).

Belongs to the intron maturase 2 family. MatK subfamily.

The protein resides in the plastid. The protein localises to the chloroplast. In terms of biological role, usually encoded in the trnK tRNA gene intron. Probably assists in splicing its own and other chloroplast group II introns. The protein is Maturase K of Solanum lycopersicum (Tomato).